Reading from the N-terminus, the 388-residue chain is Cobalt-precorrin-5B C(1)-methyltransferase (388 aa).

Belongs to the CbiD family.

It carries out the reaction Co-precorrin-5B + S-adenosyl-L-methionine = Co-precorrin-6A + S-adenosyl-L-homocysteine. It functions in the pathway cofactor biosynthesis; adenosylcobalamin biosynthesis; cob(II)yrinate a,c-diamide from sirohydrochlorin (anaerobic route): step 6/10. Functionally, catalyzes the methylation of C-1 in cobalt-precorrin-5B to form cobalt-precorrin-6A. This chain is Cobalt-precorrin-5B C(1)-methyltransferase, found in Rubrobacter xylanophilus (strain DSM 9941 / JCM 11954 / NBRC 16129 / PRD-1).